A 167-amino-acid polypeptide reads, in one-letter code: Peroxiredoxin Pen c 3 (167 aa).

The region spanning 3 to 167 (LKAGDSFPEG…SRADHVLKQL (165 aa)) is the Thioredoxin domain. Residue C60 is the Cysteine sulfenic acid (-SOH) intermediate of the active site.

This sequence belongs to the peroxiredoxin family. Prx5 subfamily. In terms of assembly, homodimer; disulfide-linked, upon oxidation.

It catalyses the reaction a hydroperoxide + [thioredoxin]-dithiol = an alcohol + [thioredoxin]-disulfide + H2O. Its function is as follows. Thiol-specific peroxidase that catalyzes the reduction of hydrogen peroxide and organic hydroperoxides to water and alcohols, respectively. Plays a role in cell protection against oxidative stress by detoxifying peroxides and as sensor of hydrogen peroxide-mediated signaling events. The protein is Peroxiredoxin Pen c 3 of Penicillium citrinum.